The chain runs to 216 residues: MQLGAFRNRGVTVPDCLPGFGHINRYWDPEHQVFAAKILPGEFYVTRGNEMIVTTLGSCVSACVRDRRLGVGGMNHFMLPVRGGDPNHWEGDPLSTATRYGNHAMEQLINRVLALGGQRQELEVKLFGGGRVLAGVTDVGKRNIEFAESYVRTEGLRLIGRDLGGQYPRKVQYFPESGRARSKKLLRTRNDTVVRREEHYLHEIDEQPVSGDVDLF.

Belongs to the CheD family.

The catalysed reaction is L-glutaminyl-[protein] + H2O = L-glutamyl-[protein] + NH4(+). In terms of biological role, probably deamidates glutamine residues to glutamate on methyl-accepting chemotaxis receptors (MCPs), playing an important role in chemotaxis. The protein is Probable chemoreceptor glutamine deamidase CheD of Halorhodospira halophila (strain DSM 244 / SL1) (Ectothiorhodospira halophila (strain DSM 244 / SL1)).